The following is a 451-amino-acid chain: Bifunctional protein GlmU (451 aa).

The interval 1–229 (MQRHAIVLAA…FEEIMGVNDR (229 aa)) is pyrophosphorylase. UDP-N-acetyl-alpha-D-glucosamine contacts are provided by residues 8 to 11 (LAAG), K22, Q72, and 77 to 78 (GT). Residue D102 coordinates Mg(2+). G139, E154, and N227 together coordinate UDP-N-acetyl-alpha-D-glucosamine. N227 contributes to the Mg(2+) binding site. A linker region spans residues 230-250 (VMLSEAEKAFRKRINEQHMKN). An N-acetyltransferase region spans residues 251-451 (GVTIIDPVTT…QTTKEGYLKK (201 aa)). UDP-N-acetyl-alpha-D-glucosamine-binding residues include R332 and K350. H362 serves as the catalytic Proton acceptor. UDP-N-acetyl-alpha-D-glucosamine contacts are provided by Y365 and N376. Acetyl-CoA contacts are provided by residues 385–386 (NY), A422, and R439.

This sequence in the N-terminal section; belongs to the N-acetylglucosamine-1-phosphate uridyltransferase family. The protein in the C-terminal section; belongs to the transferase hexapeptide repeat family. In terms of assembly, homotrimer. The cofactor is Mg(2+).

The protein localises to the cytoplasm. It carries out the reaction alpha-D-glucosamine 1-phosphate + acetyl-CoA = N-acetyl-alpha-D-glucosamine 1-phosphate + CoA + H(+). It catalyses the reaction N-acetyl-alpha-D-glucosamine 1-phosphate + UTP + H(+) = UDP-N-acetyl-alpha-D-glucosamine + diphosphate. It participates in nucleotide-sugar biosynthesis; UDP-N-acetyl-alpha-D-glucosamine biosynthesis; N-acetyl-alpha-D-glucosamine 1-phosphate from alpha-D-glucosamine 6-phosphate (route II): step 2/2. The protein operates within nucleotide-sugar biosynthesis; UDP-N-acetyl-alpha-D-glucosamine biosynthesis; UDP-N-acetyl-alpha-D-glucosamine from N-acetyl-alpha-D-glucosamine 1-phosphate: step 1/1. Its pathway is bacterial outer membrane biogenesis; LPS lipid A biosynthesis. Catalyzes the last two sequential reactions in the de novo biosynthetic pathway for UDP-N-acetylglucosamine (UDP-GlcNAc). The C-terminal domain catalyzes the transfer of acetyl group from acetyl coenzyme A to glucosamine-1-phosphate (GlcN-1-P) to produce N-acetylglucosamine-1-phosphate (GlcNAc-1-P), which is converted into UDP-GlcNAc by the transfer of uridine 5-monophosphate (from uridine 5-triphosphate), a reaction catalyzed by the N-terminal domain. The sequence is that of Bifunctional protein GlmU from Staphylococcus saprophyticus subsp. saprophyticus (strain ATCC 15305 / DSM 20229 / NCIMB 8711 / NCTC 7292 / S-41).